The sequence spans 448 residues: Protein ECM7 (448 aa).

The Cytoplasmic portion of the chain corresponds to 1–28 (MVMSRIRDTIARPFQNLTALEKVVQWLR). A helical membrane pass occupies residues 29–49 (LGTTLLIISFGLALTVGPLSS). At 50–204 (PRTLYMSRLD…MRSLKHKKAN (155 aa)) the chain is on the extracellular side. Residues 205–225 (VLHLLYAVISFQVCMLFFMIW) form a helical membrane-spanning segment. Topologically, residues 226-246 (YYYIKGRFMNALKERALVHIN) are cytoplasmic. Residues 247–267 (SLLSLVVFIGGLISSISLAWV) form a helical membrane-spanning segment. The Extracellular portion of the chain corresponds to 268-287 (NYTIQSRINTELEAFGFSYH). The helical transmembrane segment at 288-308 (LGVTWFALLWCFAGLISVSCL) threads the bilayer. Topologically, residues 309–448 (AWSGLEWCIS…VIKPSSALQF (140 aa)) are cytoplasmic. Composition is skewed to polar residues over residues 351–363 (YSQR…STSG) and 383–406 (VDLN…NISN). 2 disordered regions span residues 351-411 (YSQR…GKHE) and 427-448 (RSSN…ALQF).

The protein localises to the membrane. Functionally, may be involved in cell wall organization and biogenesis. The protein is Protein ECM7 (ECM7) of Saccharomyces cerevisiae (strain ATCC 204508 / S288c) (Baker's yeast).